The sequence spans 242 residues: Zinc-finger homeodomain protein 13 (242 aa).

A ZF-HD dimerization-type; degenerate zinc finger spans residues 64 to 111 (YYECRKNHAADIGTTAYDGCGEFVSSTGEEDSLNCAACGCHRNFHREE). The tract at residues 144 to 166 (GGKSEGKKKKKEKESYGGDPIIK) is disordered. Basic and acidic residues predominate over residues 155-166 (EKESYGGDPIIK). Positions 179 to 238 (VKRLKTKFTAEQTEKMRDYAEKLRWKVRPERQEEVEEFCVEIGVNRKNFRIWMNNHKDKI) form a DNA-binding region, homeobox.

In terms of assembly, homo- and heterodimer with other ZFHD proteins. Interacts with MIF1, MIF2 and MIF3; these interactions prevent nuclear localization and DNA-binding to inhibit transcription regulation activity. Binds to ZHD11. Mostly expressed in flowers.

It is found in the nucleus. Putative transcription factor. This chain is Zinc-finger homeodomain protein 13 (ZHD13), found in Arabidopsis thaliana (Mouse-ear cress).